Reading from the N-terminus, the 182-residue chain is uncharacterized protein (182 aa).

To M.tuberculosis Rv2313c.

This is an uncharacterized protein from Escherichia coli (strain K12).